The following is a 465-amino-acid chain: Glutamate--tRNA ligase (465 aa).

A 'HIGH' region motif is present at residues 8-18 (PSPTGHLHIGG). Zn(2+) contacts are provided by C97, C99, C124, and E126. The 'KMSKS' region signature appears at 234-238 (RLSKR). K237 provides a ligand contact to ATP.

Belongs to the class-I aminoacyl-tRNA synthetase family. Glutamate--tRNA ligase type 1 subfamily. In terms of assembly, monomer. Zn(2+) serves as cofactor.

Its subcellular location is the cytoplasm. The enzyme catalyses tRNA(Glu) + L-glutamate + ATP = L-glutamyl-tRNA(Glu) + AMP + diphosphate. Functionally, catalyzes the attachment of glutamate to tRNA(Glu) in a two-step reaction: glutamate is first activated by ATP to form Glu-AMP and then transferred to the acceptor end of tRNA(Glu). The chain is Glutamate--tRNA ligase from Thermodesulfovibrio yellowstonii (strain ATCC 51303 / DSM 11347 / YP87).